The chain runs to 129 residues: Large ribosomal subunit protein bL12 (129 aa).

Belongs to the bacterial ribosomal protein bL12 family. Homodimer. Part of the ribosomal stalk of the 50S ribosomal subunit. Forms a multimeric L10(L12)X complex, where L10 forms an elongated spine to which 2 to 4 L12 dimers bind in a sequential fashion. Binds GTP-bound translation factors.

In terms of biological role, forms part of the ribosomal stalk which helps the ribosome interact with GTP-bound translation factors. Is thus essential for accurate translation. The sequence is that of Large ribosomal subunit protein bL12 from Fervidobacterium nodosum (strain ATCC 35602 / DSM 5306 / Rt17-B1).